The chain runs to 416 residues: Serine hydroxymethyltransferase 1 (416 aa).

Residues Leu121 and 125 to 127 contribute to the (6S)-5,6,7,8-tetrahydrofolate site; that span reads GHL. An N6-(pyridoxal phosphate)lysine modification is found at Lys229. Residues Glu245 and 354–356 contribute to the (6S)-5,6,7,8-tetrahydrofolate site; that span reads SPF.

It belongs to the SHMT family. As to quaternary structure, homodimer. The cofactor is pyridoxal 5'-phosphate.

The protein localises to the cytoplasm. It catalyses the reaction (6R)-5,10-methylene-5,6,7,8-tetrahydrofolate + glycine + H2O = (6S)-5,6,7,8-tetrahydrofolate + L-serine. Its pathway is one-carbon metabolism; tetrahydrofolate interconversion. It participates in amino-acid biosynthesis; glycine biosynthesis; glycine from L-serine: step 1/1. Its function is as follows. Catalyzes the reversible interconversion of serine and glycine with tetrahydrofolate (THF) serving as the one-carbon carrier. This reaction serves as the major source of one-carbon groups required for the biosynthesis of purines, thymidylate, methionine, and other important biomolecules. Also exhibits THF-independent aldolase activity toward beta-hydroxyamino acids, producing glycine and aldehydes, via a retro-aldol mechanism. The chain is Serine hydroxymethyltransferase 1 from Vibrio parahaemolyticus serotype O3:K6 (strain RIMD 2210633).